Reading from the N-terminus, the 192-residue chain is MNTDDVLAVFREAGAILEGHFILTSGLRSPVFLQKARVFMHADKTEKLCKALAEKIRAADLGPIDYVVGPAIGGLIPSYETSRHLGVPSVWVERENGVFRLRRFDVPKGARVVIVEDIVTTGLSIRETIDCMKDLGIEVVAAACIVDRSAGKADVGTRLISLAAYEVPAYPADKLPPELAAIPAVKPGSRNI.

116 to 124 (EDIVTTGLS) lines the 5-phospho-alpha-D-ribose 1-diphosphate pocket. Orotate-binding residues include Thr-120 and Arg-148.

This sequence belongs to the purine/pyrimidine phosphoribosyltransferase family. PyrE subfamily. Homodimer. It depends on Mg(2+) as a cofactor.

The catalysed reaction is orotidine 5'-phosphate + diphosphate = orotate + 5-phospho-alpha-D-ribose 1-diphosphate. Its pathway is pyrimidine metabolism; UMP biosynthesis via de novo pathway; UMP from orotate: step 1/2. Catalyzes the transfer of a ribosyl phosphate group from 5-phosphoribose 1-diphosphate to orotate, leading to the formation of orotidine monophosphate (OMP). This chain is Orotate phosphoribosyltransferase, found in Brucella canis (strain ATCC 23365 / NCTC 10854 / RM-666).